We begin with the raw amino-acid sequence, 173 residues long: Alpha-crystallin A chain (173 aa).

Met1 bears the N-acetylmethionine mark. The tract at residues 1–63 (MDIAIQHPWF…RTVLDSGISE (63 aa)) is required for complex formation with BFSP1 and BFSP2. Position 6 is a deamidated glutamine; partial (Gln6). Phosphoserine is present on Ser45. Gln50 carries the post-translational modification Deamidated glutamine; partial. The sHSP domain occupies 52 to 162 (LFRTVLDSGI…GHSERAIPVS (111 aa)). N6-acetyllysine is present on residues Lys70 and Lys99. His100 provides a ligand contact to Zn(2+). The residue at position 101 (Asn101) is a Deamidated asparagine; partial. Zn(2+) is bound by residues Glu102 and His107. Ser122 is subject to Phosphoserine. Residue Asn123 is modified to Deamidated asparagine; partial. The tract at residues 144–173 (PKVPSGVDAGHSERAIPVSREEKPSSAPSS) is disordered. Residues 153-167 (GHSERAIPVSREEKP) are compositionally biased toward basic and acidic residues. Position 154 (His154) interacts with Zn(2+). Ser162 carries O-linked (GlcNAc) serine glycosylation.

This sequence belongs to the small heat shock protein (HSP20) family. Heteromer composed of three CRYAA and one CRYAB subunits. Inter-subunit bridging via zinc ions enhances stability, which is crucial as there is no protein turn over in the lens. Can also form homodimers and homotetramers (dimers of dimers) which serve as the building blocks of homooligomers. Within homooligomers, the zinc-binding motif is created from residues of 3 different molecules. His-100 and Glu-102 from one molecule are ligands of the zinc ion, and His-107 and His-154 residues from additional molecules complete the site with tetrahedral coordination geometry. Part of a complex required for lens intermediate filament formation composed of BFSP1, BFSP2 and CRYAA. Post-translationally, acetylation at Lys-70 may increase chaperone activity. Undergoes age-dependent proteolytical cleavage at the C-terminus.

It localises to the cytoplasm. It is found in the nucleus. In terms of biological role, contributes to the transparency and refractive index of the lens. Acts as a chaperone, preventing aggregation of various proteins under a wide range of stress conditions. Required for the correct formation of lens intermediate filaments as part of a complex composed of BFSP1, BFSP2 and CRYAA. This is Alpha-crystallin A chain (CRYAA) from Canis lupus familiaris (Dog).